The following is a 790-amino-acid chain: Tumor necrosis factor alpha-induced protein 3 (790 aa).

Ala2 carries the N-acetylalanine modification. The TRAF-binding stretch occupies residues 58–300 (PQFREIIHKA…LTDPENEMKE (243 aa)). Residues 92–263 (LVALKTNGDG…SHHFVPLVTL (172 aa)) enclose the OTU domain. Residue Asp100 is part of the active site. Cys103 (nucleophile) is an active-site residue. Interaction with ubiquitin stretches follow at residues 157–159 (LCY), 190–192 (SLE), and 224–227 (FAPL). The Proton acceptor role is filled by His256. Basic and acidic residues predominate over residues 357–368 (QENSEQGRREGH). Positions 357–377 (QENSEQGRREGHAQNPMEPSV) are disordered. The tract at residues 369-775 (AQNPMEPSVP…ACDHFGNAKC (407 aa)) is interaction with TNIP1. The A20-type 1 zinc-finger motif lies at 381–416 (SLMDVKCETPNCPFFMSVNTQPLCHECSERRQKNQN). The interval 386–453 (KCETPNCPFF…EPLAWNPEES (68 aa)) is interaction with RIPK1. Zn(2+) is bound by residues Cys387, Cys392, Cys404, and Cys407. 2 disordered regions span residues 415-434 (QNKL…PGMA) and 447-468 (AWNP…PSPF). Phosphoserine is present on Ser459. 2 A20-type zinc fingers span residues 472–507 (ETTA…LHAS) and 515–548 (HLDP…AEAS). The Zn(2+) site is built by Cys478, Cys483, Cys495, Cys498, Cys521, Cys524, Cys536, and Cys539. The disordered stretch occupies residues 550-583 (SLSTSLPPSCHQRSKSDPSRLVRSPSPHSCHRAG). Residue Ser575 is modified to Phosphoserine. An A20-type 4 zinc finger spans residues 601-636 (RTGTSKCRKAGCVYFGTPENKGFCTLCFIEYRENKH). The tract at residues 605–655 (SKCRKAGCVYFGTPENKGFCTLCFIEYRENKHFAAASGKVSPTASRFQNTI) is required for proteasomal degradation of UBE2N and UBE2D3, TRAF6 deubiquitination, and TAX1BP1 interaction with UBE2N. Positions 606 to 790 (KCRKAGCVYF…ECFQFKQMYG (185 aa)) are sufficient for inhibitory activity of TNF-induced NF-kappa-B activity. Cys607, Cys612, Cys624, and Cys627 together coordinate Zn(2+). The residue at position 645 (Ser645) is a Phosphoserine. Residues 651–686 (FQNTIPCLGRECGTLGSTMFEGYCQKCFIEAQNQRF) form an A20-type 5 zinc finger. Positions 657, 662, 674, and 677 each coordinate Zn(2+). Positions 689–705 (AKRTEEQLRSSQRRDVP) are enriched in basic and acidic residues. Positions 689–712 (AKRTEEQLRSSQRRDVPRTTQSTS) are disordered. The tract at residues 697–790 (RSSQRRDVPR…ECFQFKQMYG (94 aa)) is required for lysosomal localization and for TRAF2 lysosomal degradation. A20-type zinc fingers lie at residues 710-745 (STSR…RMGP) and 756-790 (DPPK…QMYG). 8 residues coordinate Zn(2+): Cys716, Cys721, Cys733, Cys736, Cys762, Cys767, Cys779, and Cys782.

The protein belongs to the peptidase C64 family. In terms of assembly, homodimer. Interacts with TNIP1, TAX1BP1 and TRAF2. Interacts with RNF11, ITCH and TAX1BP1 only after TNF stimulation; these interaction are transient and they are lost after 1 hour of stimulation with TNF. Interacts with YWHAZ and YWHAH. Interacts with IKBKG; the interaction is induced by TNF stimulation and by polyubiquitin. Interacts with RIPK1. Interacts with UBE2N; the interaction requires TAX1BP1. Interacts with TRAF6; the interaction is inhibited by HTLV-1 protein Tax. Post-translationally, proteolytically cleaved by MALT1 upon TCR stimulation; disrupts NF-kappa-B inhibitory function and results in increased IL-2 production. It is proposed that only a fraction of TNFAIP3 colocalized with TCR and CBM complex is cleaved, leaving the main TNFAIP3 pool intact.

Its subcellular location is the cytoplasm. It localises to the nucleus. It is found in the lysosome. The enzyme catalyses Thiol-dependent hydrolysis of ester, thioester, amide, peptide and isopeptide bonds formed by the C-terminal Gly of ubiquitin (a 76-residue protein attached to proteins as an intracellular targeting signal).. In terms of biological role, ubiquitin-editing enzyme that contains both ubiquitin ligase and deubiquitinase activities. Involved in immune and inflammatory responses signaled by cytokines, such as TNF-alpha and IL-1 beta, or pathogens via Toll-like receptors (TLRs) through terminating NF-kappa-B activity. Essential component of a ubiquitin-editing protein complex, comprising also RNF11, ITCH and TAX1BP1, that ensures the transient nature of inflammatory signaling pathways. In cooperation with TAX1BP1 promotes disassembly of E2-E3 ubiquitin protein ligase complexes in IL-1R and TNFR-1 pathways; affected are at least E3 ligases TRAF6, TRAF2 and BIRC2, and E2 ubiquitin-conjugating enzymes UBE2N and UBE2D3. In cooperation with TAX1BP1 promotes ubiquitination of UBE2N and proteasomal degradation of UBE2N and UBE2D3. Upon TNF stimulation, deubiquitinates 'Lys-63'-polyubiquitin chains on RIPK1 and catalyzes the formation of 'Lys-48'-polyubiquitin chains. This leads to RIPK1 proteasomal degradation and consequently termination of the TNF- or LPS-mediated activation of NF-kappa-B. Deubiquitinates TRAF6 probably acting on 'Lys-63'-linked polyubiquitin. Upon T-cell receptor (TCR)-mediated T-cell activation, deubiquitinates 'Lys-63'-polyubiquitin chains on MALT1 thereby mediating disassociation of the CBM (CARD11:BCL10:MALT1) and IKK complexes and preventing sustained IKK activation. Deubiquitinates NEMO/IKBKG; the function is facilitated by TNIP1 and leads to inhibition of NF-kappa-B activation. Upon stimulation by bacterial peptidoglycans, probably deubiquitinates RIPK2. Can also inhibit I-kappa-B-kinase (IKK) through a non-catalytic mechanism which involves polyubiquitin; polyubiquitin promotes association with IKBKG and prevents IKK MAP3K7-mediated phosphorylation. Targets TRAF2 for lysosomal degradation. In vitro able to deubiquitinate 'Lys-11'-, 'Lys-48'- and 'Lys-63' polyubiquitin chains. Inhibitor of programmed cell death. Has a role in the function of the lymphoid system. Required for LPS-induced production of pro-inflammatory cytokines and IFN beta in LPS-tolerized macrophages. The sequence is that of Tumor necrosis factor alpha-induced protein 3 (TNFAIP3) from Homo sapiens (Human).